Reading from the N-terminus, the 541-residue chain is Zinc finger protein 513 (541 aa).

Residues 1–120 (MPRRKQSHPQ…ARGERPGPAC (120 aa)) are disordered. Residues 44-55 (LEFEEEEEEEEG) show a composition bias toward acidic residues. Ser85 and Ser96 each carry phosphoserine. The segment covering 103–115 (EPARGPGEARGER) has biased composition (basic and acidic residues). 8 consecutive C2H2-type zinc fingers follow at residues 150–172 (YSCR…MQTH), 178–200 (FRCG…TRTH), 206–228 (YRCP…QRTH), 360–382 (FACS…MKTH), 388–410 (FRCA…QRVH), 416–438 (YKCP…GRIH), 444–466 (FRCS…MLRH), and 472–494 (FRCA…QKVH). The tract at residues 492–541 (KVHGHGGAGGPGLSAPEGWAPPHSPPSVLSTRGSAALGATGSRALHTDSP) is disordered.

Belongs to the krueppel C2H2-type zinc-finger protein family. In terms of assembly, binds DNA. Can associate with the proximal promoter regions of PAX6 and SP4, and their known targets including ARR3, RHO, OPN1MW2 and OPN1SW.

The protein resides in the nucleus. Functionally, transcriptional regulator that plays a role in retinal development and maintenance. This Rattus norvegicus (Rat) protein is Zinc finger protein 513 (Znf513).